A 450-amino-acid chain; its full sequence is Methylenetetrahydrofolate--tRNA-(uracil-5-)-methyltransferase TrmFO (450 aa).

10–15 lines the FAD pocket; sequence GGGLAG.

Belongs to the MnmG family. TrmFO subfamily. Requires FAD as cofactor.

The protein resides in the cytoplasm. The enzyme catalyses uridine(54) in tRNA + (6R)-5,10-methylene-5,6,7,8-tetrahydrofolate + NADH + H(+) = 5-methyluridine(54) in tRNA + (6S)-5,6,7,8-tetrahydrofolate + NAD(+). It catalyses the reaction uridine(54) in tRNA + (6R)-5,10-methylene-5,6,7,8-tetrahydrofolate + NADPH + H(+) = 5-methyluridine(54) in tRNA + (6S)-5,6,7,8-tetrahydrofolate + NADP(+). In terms of biological role, catalyzes the folate-dependent formation of 5-methyl-uridine at position 54 (M-5-U54) in all tRNAs. In Anaeromyxobacter dehalogenans (strain 2CP-C), this protein is Methylenetetrahydrofolate--tRNA-(uracil-5-)-methyltransferase TrmFO.